The primary structure comprises 525 residues: Peptide chain release factor 3 (525 aa).

A tr-type G domain is found at Glu-11 to Glu-279. GTP is bound by residues Ser-20 to Thr-27, Asp-88 to His-92, and Asn-142 to Asp-145.

The protein belongs to the TRAFAC class translation factor GTPase superfamily. Classic translation factor GTPase family. PrfC subfamily.

Its subcellular location is the cytoplasm. Its function is as follows. Increases the formation of ribosomal termination complexes and stimulates activities of RF-1 and RF-2. It binds guanine nucleotides and has strong preference for UGA stop codons. It may interact directly with the ribosome. The stimulation of RF-1 and RF-2 is significantly reduced by GTP and GDP, but not by GMP. The protein is Peptide chain release factor 3 of Latilactobacillus sakei subsp. sakei (strain 23K) (Lactobacillus sakei subsp. sakei).